The primary structure comprises 947 residues: Ionotropic receptor 25a (947 aa).

Residues 1–30 form the signal peptide; the sequence is MILMNPKTSKILWLLGFLSLLSSFSLEIAA. Topologically, residues 31-562 are extracellular; it reads QTTQNINVLF…SLFKFLTVLE (532 aa). Residues N78, N177, N277, and N434 are each glycosylated (N-linked (GlcNAc...) asparagine). The chain crosses the membrane as a helical span at residues 563–583; the sequence is TNVWLCILAAYFFTSFLMWIF. Topologically, residues 584-641 are cytoplasmic; it reads DRWSPYSYQNNREKYKDDEEKREFNLKECLWFCMTSLTPQGGGEAPKNLSGRLVAATW. Residues 642–662 traverse the membrane as a helical segment; that stretch reads WLFGFIIIASYTANLAAFLTV. Over 663-858 the chain is Extracellular; the sequence is SRLDTPVESL…DQSDGISIQN (196 aa). Residues N687, N715, and N762 are each glycosylated (N-linked (GlcNAc...) asparagine). A helical transmembrane segment spans residues 859–879; that stretch reads IGGVFIVIFVGIGMACITLVF. Topologically, residues 880–947 are cytoplasmic; the sequence is EYWWYRYRKN…QYPATFKPRF (68 aa).

Belongs to the glutamate-gated ion channel (TC 1.A.10.1) family. In terms of assembly, interacts with nocte. In the antenna, detected in neurons of the arista and also detected in sacculus neurons which innervate the first and second chambers (at protein level). Throughout the main body of the antenna, expressed in neurons which innervate the coeloconic class of olfactory sensilla (at protein level). Expressed in multiple cells of the dorsal organ including the dorsal organ cool cells (at protein level). Detected in femur and retina. Expressed in a subset of femur chordonotal neurons and antennal Johnston's Organ neurons.

The protein localises to the cell membrane. It is found in the cell projection. Its subcellular location is the axon. The protein resides in the dendrite. It localises to the perikaryon. The protein localises to the cilium. Functionally, integral part of various neural sensory systems in the antenna that provide the neural basis for the response to environmental changes in temperature (thermosensation), humidity (hygrosensation) and odor detection. Required for odor-evoked electrophysiological responses in multiple neuron classes in the antenna and is likely to function as part of an olfactory receptor complex with Ir76a and Ir76b. Together with Ir21a and Ir93a, mediates the response of the larval dorsal organ cool cells, a trio of cool-responsive neurons, to cooling and is required for cool avoidance behavior. Required in chordonotal organ neurons for behavioral synchronization to low-amplitude temperature cycles and mediates circadian clock resetting by temperature. Together with Ir40a and Ir93a, mediates the response of the hydrosensory sacculus neurons to changes in relative humidity, and is required for dry detection and humidiy preference behavior. In Drosophila melanogaster (Fruit fly), this protein is Ionotropic receptor 25a.